Reading from the N-terminus, the 162-residue chain is 2-C-methyl-D-erythritol 2,4-cyclodiphosphate synthase (162 aa).

Residues Asp-8 and His-10 each contribute to the a divalent metal cation site. Residues 8–10 (DVH) and 34–35 (HS) contribute to the 4-CDP-2-C-methyl-D-erythritol 2-phosphate site. His-42 is a binding site for a divalent metal cation. 4-CDP-2-C-methyl-D-erythritol 2-phosphate-binding positions include 56 to 58 (DIG), 61 to 65 (FPDND), 132 to 135 (TTTE), Phe-139, and Lys-142.

Belongs to the IspF family. In terms of assembly, homotrimer. It depends on a divalent metal cation as a cofactor.

It catalyses the reaction 4-CDP-2-C-methyl-D-erythritol 2-phosphate = 2-C-methyl-D-erythritol 2,4-cyclic diphosphate + CMP. The protein operates within isoprenoid biosynthesis; isopentenyl diphosphate biosynthesis via DXP pathway; isopentenyl diphosphate from 1-deoxy-D-xylulose 5-phosphate: step 4/6. In terms of biological role, involved in the biosynthesis of isopentenyl diphosphate (IPP) and dimethylallyl diphosphate (DMAPP), two major building blocks of isoprenoid compounds. Catalyzes the conversion of 4-diphosphocytidyl-2-C-methyl-D-erythritol 2-phosphate (CDP-ME2P) to 2-C-methyl-D-erythritol 2,4-cyclodiphosphate (ME-CPP) with a corresponding release of cytidine 5-monophosphate (CMP). The chain is 2-C-methyl-D-erythritol 2,4-cyclodiphosphate synthase from Pelotomaculum thermopropionicum (strain DSM 13744 / JCM 10971 / SI).